Here is a 397-residue protein sequence, read N- to C-terminus: Acetate kinase (397 aa).

Asparagine 8 contacts Mg(2+). ATP is bound at residue lysine 15. Arginine 90 contributes to the substrate binding site. The Proton donor/acceptor role is filled by aspartate 147. Residues 207-211 (HLGAG), 283-285 (DMR), and 330-334 (GVGEN) each bind ATP. Position 383 (glutamate 383) interacts with Mg(2+).

It belongs to the acetokinase family. Homodimer. It depends on Mg(2+) as a cofactor. Mn(2+) serves as cofactor.

The protein localises to the cytoplasm. The enzyme catalyses acetate + ATP = acetyl phosphate + ADP. The protein operates within metabolic intermediate biosynthesis; acetyl-CoA biosynthesis; acetyl-CoA from acetate: step 1/2. Its function is as follows. Catalyzes the formation of acetyl phosphate from acetate and ATP. Can also catalyze the reverse reaction. The protein is Acetate kinase of Fructilactobacillus sanfranciscensis (Lactobacillus sanfranciscensis).